A 178-amino-acid polypeptide reads, in one-letter code: Interleukin-10 (178 aa).

A signal peptide spans 1–18 (MPGSALLCCLLLLAGVKT). Asparagine 29 is a glycosylation site (N-linked (GlcNAc...) asparagine). Intrachain disulfides connect cysteine 30–cysteine 126 and cysteine 80–cysteine 132. N-linked (GlcNAc...) asparagine glycosylation is present at asparagine 134.

Belongs to the IL-10 family. Homodimer. Interacts with IL10RA and IL10RB.

The protein localises to the secreted. In terms of biological role, major immune regulatory cytokine that acts on many cells of the immune system where it has profound anti-inflammatory functions, limiting excessive tissue disruption caused by inflammation. Mechanistically, IL10 binds to its heterotetrameric receptor comprising IL10RA and IL10RB leading to JAK1 and STAT2-mediated phosphorylation of STAT3. In turn, STAT3 translocates to the nucleus where it drives expression of anti-inflammatory mediators. Targets antigen-presenting cells (APCs) such as macrophages and monocytes and inhibits their release of pro-inflammatory cytokines including granulocyte-macrophage colony-stimulating factor /GM-CSF, granulocyte colony-stimulating factor/G-CSF, IL-1 alpha, IL-1 beta, IL-6, IL-8 and TNF-alpha. Also interferes with antigen presentation by reducing the expression of MHC-class II and co-stimulatory molecules, thereby inhibiting their ability to induce T cell activation. In addition, controls the inflammatory response of macrophages by reprogramming essential metabolic pathways including mTOR signaling. The protein is Interleukin-10 (Il10) of Rattus norvegicus (Rat).